The chain runs to 282 residues: Pantothenate synthetase (282 aa).

30 to 37 provides a ligand contact to ATP; sequence MGYLHEGH. The Proton donor role is filled by H37. (R)-pantoate is bound at residue Q61. Q61 is a beta-alanine binding site. 147–150 provides a ligand contact to ATP; the sequence is GMKD. Q153 is a binding site for (R)-pantoate. ATP-binding positions include V176 and 184–187; that span reads KSSR.

Belongs to the pantothenate synthetase family. As to quaternary structure, homodimer.

Its subcellular location is the cytoplasm. It carries out the reaction (R)-pantoate + beta-alanine + ATP = (R)-pantothenate + AMP + diphosphate + H(+). It participates in cofactor biosynthesis; (R)-pantothenate biosynthesis; (R)-pantothenate from (R)-pantoate and beta-alanine: step 1/1. In terms of biological role, catalyzes the condensation of pantoate with beta-alanine in an ATP-dependent reaction via a pantoyl-adenylate intermediate. This Bacillus thuringiensis (strain Al Hakam) protein is Pantothenate synthetase.